The primary structure comprises 396 residues: Mannonate dehydratase (396 aa).

Belongs to the mannonate dehydratase family. Fe(2+) is required as a cofactor. Requires Mn(2+) as cofactor.

It carries out the reaction D-mannonate = 2-dehydro-3-deoxy-D-gluconate + H2O. It functions in the pathway carbohydrate metabolism; pentose and glucuronate interconversion. Catalyzes the dehydration of D-mannonate. The chain is Mannonate dehydratase from Enterobacter sp. (strain 638).